The primary structure comprises 506 residues: UPF0371 protein FN1121 (506 aa).

Belongs to the UPF0371 family.

This chain is UPF0371 protein FN1121, found in Fusobacterium nucleatum subsp. nucleatum (strain ATCC 25586 / DSM 15643 / BCRC 10681 / CIP 101130 / JCM 8532 / KCTC 2640 / LMG 13131 / VPI 4355).